The chain runs to 305 residues: Nitrogen assimilation regulatory protein nac (305 aa).

The region spanning 1–58 (MNFRRLKYFVKIVDIGSLTQAAEVLHIAQPALSQQVATLEGELNQQLLIRTKRGVTPT) is the HTH lysR-type domain. Residues 18-37 (LTQAAEVLHIAQPALSQQVA) constitute a DNA-binding region (H-T-H motif).

This sequence belongs to the LysR transcriptional regulatory family.

Its function is as follows. Transcriptional activator for the hut, put and ure operons and repressor for the gdh and gltB operons in response to nitrogen limitation. Negative regulator of its own expression. The chain is Nitrogen assimilation regulatory protein nac (nac) from Escherichia coli (strain K12).